The sequence spans 329 residues: uncharacterized protein (329 aa).

The interval 1 to 20 (MGESTTQPAGGAAVDDETRS) is disordered.

This is an uncharacterized protein from Mycobacterium tuberculosis (strain CDC 1551 / Oshkosh).